The following is a 469-amino-acid chain: Protein C-ets-2 (469 aa).

The 86-residue stretch at 85–170 (ATFSGFKKEQ…EHLEQMIKEN (86 aa)) folds into the PNT domain. A phosphoserine mark is found at Ser220 and Ser225. The segment at 264 to 289 (NLLTNNSGTPKDHDSPENGADSFESS) is disordered. A phosphoserine mark is found at Ser295, Ser298, and Ser301. Positions 363–443 (IQLWQFLLEL…SGKRYVYRFV (81 aa)) form a DNA-binding region, ETS.

The protein belongs to the ETS family. Phosphorylation by CDK10 at Ser-220 and Ser-225 creates a phosphodegron that targets ETS2 for proteasomal degradation.

The protein localises to the nucleus. Transcription factor activating transcription. Binds specifically the DNA GGAA/T core motif (Ets-binding site or EBS) in gene promoters and stimulates transcription. The sequence is that of Protein C-ets-2 (ETS2) from Homo sapiens (Human).